The following is a 212-amino-acid chain: Adenylate kinase (212 aa).

Residue 14–19 participates in ATP binding; that stretch reads GSGKGT. The NMP stretch occupies residues 34 to 63; it reads STGDLFRKKISEDSRFAAQIQNYLSSGSYV. Residues T35, R40, 61–63, 89–92, and Q96 each bind AMP; these read SYV and GYPR. The LID stretch occupies residues 126–163; the sequence is QRLFCQKCQKSYNLLLAKPKNGLKCDLDNTDLITRNDD. An ATP-binding site is contributed by R127. Zn(2+) contacts are provided by C130 and C133. An ATP-binding site is contributed by 136–137; that stretch reads SY. Residues C150 and D153 each coordinate Zn(2+). AMP-binding residues include R160 and R171. Position 199 (Q199) interacts with ATP.

It belongs to the adenylate kinase family. In terms of assembly, monomer.

It localises to the cytoplasm. It catalyses the reaction AMP + ATP = 2 ADP. The protein operates within purine metabolism; AMP biosynthesis via salvage pathway; AMP from ADP: step 1/1. Catalyzes the reversible transfer of the terminal phosphate group between ATP and AMP. Plays an important role in cellular energy homeostasis and in adenine nucleotide metabolism. The chain is Adenylate kinase from Mesomycoplasma hyopneumoniae (strain 232) (Mycoplasma hyopneumoniae).